The following is a 215-amino-acid chain: Holliday junction branch migration complex subunit RuvA (215 aa).

A domain I region spans residues 1–67 (MIGWLQGERI…DDGSTLFGFC (67 aa)). The domain II stretch occupies residues 68 to 146 (DQQERDLFRT…NWAPLQEPSL (79 aa)). The tract at residues 147–158 (SLVDRSDVKAIP) is flexible linker. The interval 159-215 (LGEPCLRDLQITLETLGYEDLEIRRAMRAVASGPDVPAEDDGDAWLRASLKWLSQSA) is domain III.

This sequence belongs to the RuvA family. In terms of assembly, homotetramer. Forms an RuvA(8)-RuvB(12)-Holliday junction (HJ) complex. HJ DNA is sandwiched between 2 RuvA tetramers; dsDNA enters through RuvA and exits via RuvB. An RuvB hexamer assembles on each DNA strand where it exits the tetramer. Each RuvB hexamer is contacted by two RuvA subunits (via domain III) on 2 adjacent RuvB subunits; this complex drives branch migration. In the full resolvosome a probable DNA-RuvA(4)-RuvB(12)-RuvC(2) complex forms which resolves the HJ.

The protein resides in the cytoplasm. The RuvA-RuvB-RuvC complex processes Holliday junction (HJ) DNA during genetic recombination and DNA repair, while the RuvA-RuvB complex plays an important role in the rescue of blocked DNA replication forks via replication fork reversal (RFR). RuvA specifically binds to HJ cruciform DNA, conferring on it an open structure. The RuvB hexamer acts as an ATP-dependent pump, pulling dsDNA into and through the RuvAB complex. HJ branch migration allows RuvC to scan DNA until it finds its consensus sequence, where it cleaves and resolves the cruciform DNA. This chain is Holliday junction branch migration complex subunit RuvA, found in Synechococcus sp. (strain WH7803).